The chain runs to 270 residues: Type III pantothenate kinase (270 aa).

Residue 19–26 (DIGNTSTT) participates in ATP binding. Substrate is bound by residues Tyr-109 and 116-119 (GADR). Asp-118 (proton acceptor) is an active-site residue. Position 139 (Asp-139) interacts with K(+). Thr-142 serves as a coordination point for ATP. Thr-194 contributes to the substrate binding site.

Belongs to the type III pantothenate kinase family. As to quaternary structure, homodimer. The cofactor is NH4(+). K(+) is required as a cofactor.

It localises to the cytoplasm. It catalyses the reaction (R)-pantothenate + ATP = (R)-4'-phosphopantothenate + ADP + H(+). Its pathway is cofactor biosynthesis; coenzyme A biosynthesis; CoA from (R)-pantothenate: step 1/5. Functionally, catalyzes the phosphorylation of pantothenate (Pan), the first step in CoA biosynthesis. This chain is Type III pantothenate kinase, found in Chlorobaculum tepidum (strain ATCC 49652 / DSM 12025 / NBRC 103806 / TLS) (Chlorobium tepidum).